The sequence spans 426 residues: Serine--tRNA ligase (426 aa).

233–235 (TSE) provides a ligand contact to L-serine. 264-266 (RSE) serves as a coordination point for ATP. Glu287 contacts L-serine. Position 351-354 (351-354 (EISS)) interacts with ATP. Ser387 is a binding site for L-serine.

The protein belongs to the class-II aminoacyl-tRNA synthetase family. Type-1 seryl-tRNA synthetase subfamily. In terms of assembly, homodimer. The tRNA molecule binds across the dimer.

The protein resides in the cytoplasm. It catalyses the reaction tRNA(Ser) + L-serine + ATP = L-seryl-tRNA(Ser) + AMP + diphosphate + H(+). The enzyme catalyses tRNA(Sec) + L-serine + ATP = L-seryl-tRNA(Sec) + AMP + diphosphate + H(+). It participates in aminoacyl-tRNA biosynthesis; selenocysteinyl-tRNA(Sec) biosynthesis; L-seryl-tRNA(Sec) from L-serine and tRNA(Sec): step 1/1. In terms of biological role, catalyzes the attachment of serine to tRNA(Ser). Is also able to aminoacylate tRNA(Sec) with serine, to form the misacylated tRNA L-seryl-tRNA(Sec), which will be further converted into selenocysteinyl-tRNA(Sec). This chain is Serine--tRNA ligase, found in Colwellia psychrerythraea (strain 34H / ATCC BAA-681) (Vibrio psychroerythus).